The following is a 444-amino-acid chain: Bystin (444 aa).

Disordered regions lie at residues Met1–Gln37 and Ala53–Glu85. A compositionally biased stretch (basic residues) spans Ser24–His34. Over residues Ala73–Gly84 the composition is skewed to low complexity.

It belongs to the bystin family. In terms of assembly, component of the 40S pre-ribosome. Highly expressed in flowers and at lower levels in roots, hypocotyls, stems, leaves, siliques and seeds.

Its subcellular location is the nucleus. The protein resides in the nucleolus. It localises to the nucleoplasm. Essential protein required during embryogenesis and pollen development. Required for processing of 20S pre-rRNA precursor and biogenesis of 40S ribosomal subunits. This Arabidopsis thaliana (Mouse-ear cress) protein is Bystin.